Consider the following 235-residue polypeptide: Heme oxygenase (235 aa).

Histidine 19 provides a ligand contact to heme b.

This sequence belongs to the heme oxygenase family.

The protein localises to the plastid. The protein resides in the chloroplast. It carries out the reaction heme b + 3 reduced [NADPH--hemoprotein reductase] + 3 O2 = biliverdin IXalpha + CO + Fe(2+) + 3 oxidized [NADPH--hemoprotein reductase] + 3 H2O + H(+). Its function is as follows. Catalyzes the opening of the heme ring with the release of iron. Key enzyme in the synthesis of the chromophoric part of the photosynthetic antennae. This Rhodella violacea (Red alga) protein is Heme oxygenase (pbsA).